We begin with the raw amino-acid sequence, 96 residues long: Co-chaperonin GroES (96 aa).

This sequence belongs to the GroES chaperonin family. Heptamer of 7 subunits arranged in a ring. Interacts with the chaperonin GroEL.

It is found in the cytoplasm. Together with the chaperonin GroEL, plays an essential role in assisting protein folding. The GroEL-GroES system forms a nano-cage that allows encapsulation of the non-native substrate proteins and provides a physical environment optimized to promote and accelerate protein folding. GroES binds to the apical surface of the GroEL ring, thereby capping the opening of the GroEL channel. The polypeptide is Co-chaperonin GroES (Cupriavidus necator (strain ATCC 17699 / DSM 428 / KCTC 22496 / NCIMB 10442 / H16 / Stanier 337) (Ralstonia eutropha)).